The following is a 106-amino-acid chain: NADH-quinone oxidoreductase subunit K (106 aa).

Transmembrane regions (helical) follow at residues 8 to 28 (IGIENYIYLCVVLFCIGIFGV), 35 to 55 (IIMFMSIEIMLNAVNLLFVAF), and 66 to 86 (VFVFFSMAVAAAEVAVGLAIL).

It belongs to the complex I subunit 4L family. As to quaternary structure, NDH-1 is composed of 14 different subunits. Subunits NuoA, H, J, K, L, M, N constitute the membrane sector of the complex.

It is found in the cell inner membrane. The catalysed reaction is a quinone + NADH + 5 H(+)(in) = a quinol + NAD(+) + 4 H(+)(out). In terms of biological role, NDH-1 shuttles electrons from NADH, via FMN and iron-sulfur (Fe-S) centers, to quinones in the respiratory chain. The immediate electron acceptor for the enzyme in this species is believed to be a menaquinone. Couples the redox reaction to proton translocation (for every two electrons transferred, four hydrogen ions are translocated across the cytoplasmic membrane), and thus conserves the redox energy in a proton gradient. This Flavobacterium psychrophilum (strain ATCC 49511 / DSM 21280 / CIP 103535 / JIP02/86) protein is NADH-quinone oxidoreductase subunit K.